A 340-amino-acid chain; its full sequence is GTP 3',8-cyclase (340 aa).

One can recognise a Radical SAM core domain in the interval 20–246 (RFERQYVYLR…PKALSDGPAK (227 aa)). R29 serves as a coordination point for GTP. Positions 36 and 40 each coordinate [4Fe-4S] cluster. Y42 contacts S-adenosyl-L-methionine. C43 provides a ligand contact to [4Fe-4S] cluster. R79 contacts GTP. G83 is a binding site for S-adenosyl-L-methionine. Residue T110 participates in GTP binding. S-adenosyl-L-methionine is bound at residue S134. K171 serves as a coordination point for GTP. M205 serves as a coordination point for S-adenosyl-L-methionine. Positions 268 and 271 each coordinate [4Fe-4S] cluster. 273-275 (RLR) provides a ligand contact to GTP. C285 serves as a coordination point for [4Fe-4S] cluster.

Belongs to the radical SAM superfamily. MoaA family. As to quaternary structure, monomer and homodimer. The cofactor is [4Fe-4S] cluster.

The enzyme catalyses GTP + AH2 + S-adenosyl-L-methionine = (8S)-3',8-cyclo-7,8-dihydroguanosine 5'-triphosphate + 5'-deoxyadenosine + L-methionine + A + H(+). It participates in cofactor biosynthesis; molybdopterin biosynthesis. Its function is as follows. Catalyzes the cyclization of GTP to (8S)-3',8-cyclo-7,8-dihydroguanosine 5'-triphosphate. The protein is GTP 3',8-cyclase of Actinobacillus pleuropneumoniae serotype 7 (strain AP76).